A 167-amino-acid polypeptide reads, in one-letter code: Large ribosomal subunit protein uL10 (167 aa).

This sequence belongs to the universal ribosomal protein uL10 family. Part of the ribosomal stalk of the 50S ribosomal subunit. The N-terminus interacts with L11 and the large rRNA to form the base of the stalk. The C-terminus forms an elongated spine to which L12 dimers bind in a sequential fashion forming a multimeric L10(L12)X complex.

Forms part of the ribosomal stalk, playing a central role in the interaction of the ribosome with GTP-bound translation factors. The protein is Large ribosomal subunit protein uL10 of Latilactobacillus sakei subsp. sakei (strain 23K) (Lactobacillus sakei subsp. sakei).